Consider the following 150-residue polypeptide: D-aminoacyl-tRNA deacylase (150 aa).

A Gly-cisPro motif, important for rejection of L-amino acids motif is present at residues 138 to 139; it reads GP.

Belongs to the DTD family. Homodimer.

The protein localises to the cytoplasm. The catalysed reaction is glycyl-tRNA(Ala) + H2O = tRNA(Ala) + glycine + H(+). It carries out the reaction a D-aminoacyl-tRNA + H2O = a tRNA + a D-alpha-amino acid + H(+). Functionally, an aminoacyl-tRNA editing enzyme that deacylates mischarged D-aminoacyl-tRNAs. Also deacylates mischarged glycyl-tRNA(Ala), protecting cells against glycine mischarging by AlaRS. Acts via tRNA-based rather than protein-based catalysis; rejects L-amino acids rather than detecting D-amino acids in the active site. By recycling D-aminoacyl-tRNA to D-amino acids and free tRNA molecules, this enzyme counteracts the toxicity associated with the formation of D-aminoacyl-tRNA entities in vivo and helps enforce protein L-homochirality. This Bacteroides fragilis (strain YCH46) protein is D-aminoacyl-tRNA deacylase.